The sequence spans 364 residues: 3-isopropylmalate dehydrogenase (364 aa).

76–89 (GPKWDGNAPEKRPE) provides a ligand contact to NAD(+). Arginine 96, arginine 106, arginine 134, and aspartate 223 together coordinate substrate. 3 residues coordinate Mg(2+): aspartate 223, aspartate 247, and aspartate 251. 281 to 293 (GSAPDIAGTGAAN) serves as a coordination point for NAD(+).

This sequence belongs to the isocitrate and isopropylmalate dehydrogenases family. LeuB type 1 subfamily. Homodimer. Requires Mg(2+) as cofactor. The cofactor is Mn(2+).

It is found in the cytoplasm. It carries out the reaction (2R,3S)-3-isopropylmalate + NAD(+) = 4-methyl-2-oxopentanoate + CO2 + NADH. Its pathway is amino-acid biosynthesis; L-leucine biosynthesis; L-leucine from 3-methyl-2-oxobutanoate: step 3/4. Its function is as follows. Catalyzes the oxidation of 3-carboxy-2-hydroxy-4-methylpentanoate (3-isopropylmalate) to 3-carboxy-4-methyl-2-oxopentanoate. The product decarboxylates to 4-methyl-2 oxopentanoate. This Shouchella clausii (strain KSM-K16) (Alkalihalobacillus clausii) protein is 3-isopropylmalate dehydrogenase.